The chain runs to 94 residues: Putative pterin-4-alpha-carbinolamine dehydratase (94 aa).

Belongs to the pterin-4-alpha-carbinolamine dehydratase family.

The catalysed reaction is (4aS,6R)-4a-hydroxy-L-erythro-5,6,7,8-tetrahydrobiopterin = (6R)-L-erythro-6,7-dihydrobiopterin + H2O. In Mycobacteroides abscessus (strain ATCC 19977 / DSM 44196 / CCUG 20993 / CIP 104536 / JCM 13569 / NCTC 13031 / TMC 1543 / L948) (Mycobacterium abscessus), this protein is Putative pterin-4-alpha-carbinolamine dehydratase.